The chain runs to 304 residues: Beta-lactamase-like protein str6 (304 aa).

Belongs to the beta-lactamase family.

It participates in mycotoxin biosynthesis. Functionally, beta-lactamase-like protein; part of the gene cluster that mediates the biosynthesis of strobilurin A, an antifungal polyketide that contains a key beta-methoxyacrylate toxophore that targets the complex III of the mitochondrial electron transport chain. Strobilurin biosynthesis begins with construction of benzoyl CoA by step-wise elimination of ammonia from phenylalanine by the phenylalanine ammonia-lyase str11, oxygenation by str8 and retro-Claisen reaction to form benzoic acid, which is activated to its CoA thiolester benzoyl CoA by the dedicated CoA ligase str10. Benzoyl CoA forms the starter unit for the highly reducing polyketide synthase stpks1 that produces the polyketide prestrobilutin A. The FAD-dependent oxygenase str9 then catalyzes the key oxidative rearrangement responsible for the creation of the beta-methoxyacrylate toxophore. Str9 performs epoxidation of the 2,3 olefin of prestrobilutin A, followed by Meinwald rearrangement to furnish the aldehyde intermediate. Rapid enolization of the aldehyde intermediate would give the beta-methoxyacrylate skeleton and methylations catalyzed by str2 and str3 complete the synthesis and lead to the production of strobilurin A. The short-chain dehydrogenase stl2 and the dehydrogenase str4 play a role in the shunt pathway leading to the production of bolineol. The cluster encodes no obvious halogenase gene that could be involved in production of strobilurin B, nor any obvious dimethylallyl-transferase that could be involved in the production of strobilurin G. It is possible that unknown proteins encoded in, or near, the cluster (such as str1 or stl1) may form new classes of halogenases or dimethylally-transferases, or that the responsible genes are located elsewhere on the genome. Similarly, proteins encoded by str5/str6 hydrolases appear to have no chemical role in the biosynthesis of strobilurin A. Finally, no obvious self-resistance gene is found within the cluster. The chain is Beta-lactamase-like protein str6 from Strobilurus tenacellus.